A 353-amino-acid polypeptide reads, in one-letter code: Delta-aminolevulinic acid dehydratase (353 aa).

Lys-221 acts as the Schiff-base intermediate with substrate in catalysis. Residues Arg-231 and Lys-244 each coordinate 5-aminolevulinate. Glu-260 contacts Mg(2+). Lys-275 acts as the Schiff-base intermediate with substrate in catalysis. Positions 301 and 340 each coordinate 5-aminolevulinate.

It belongs to the ALAD family. Homooctamer. Mg(2+) is required as a cofactor.

It catalyses the reaction 2 5-aminolevulinate = porphobilinogen + 2 H2O + H(+). The protein operates within porphyrin-containing compound metabolism; protoporphyrin-IX biosynthesis; coproporphyrinogen-III from 5-aminolevulinate: step 1/4. Functionally, catalyzes an early step in the biosynthesis of tetrapyrroles. Binds two molecules of 5-aminolevulinate per subunit, each at a distinct site, and catalyzes their condensation to form porphobilinogen. Required for nodule development. The protein is Delta-aminolevulinic acid dehydratase (hemB) of Bradyrhizobium diazoefficiens (strain JCM 10833 / BCRC 13528 / IAM 13628 / NBRC 14792 / USDA 110).